A 256-amino-acid polypeptide reads, in one-letter code: Geranylgeranylglyceryl phosphate synthase (256 aa).

2 residues coordinate Mg(2+): Asp28 and Ser53. Residues 172–178, 203–204, and 225–226 each bind sn-glycerol 1-phosphate; these read YLEAGSG, GG, and GT.

It belongs to the GGGP/HepGP synthase family. Group II subfamily. Mg(2+) is required as a cofactor.

It is found in the cytoplasm. The enzyme catalyses sn-glycerol 1-phosphate + (2E,6E,10E)-geranylgeranyl diphosphate = sn-3-O-(geranylgeranyl)glycerol 1-phosphate + diphosphate. It participates in membrane lipid metabolism; glycerophospholipid metabolism. Prenyltransferase that catalyzes the transfer of the geranylgeranyl moiety of geranylgeranyl diphosphate (GGPP) to the C3 hydroxyl of sn-glycerol-1-phosphate (G1P). This reaction is the first ether-bond-formation step in the biosynthesis of archaeal membrane lipids. This is Geranylgeranylglyceryl phosphate synthase from Methanococcus maripaludis (strain DSM 14266 / JCM 13030 / NBRC 101832 / S2 / LL).